A 291-amino-acid polypeptide reads, in one-letter code: Ribosomal RNA small subunit methyltransferase H (291 aa).

S-adenosyl-L-methionine-binding positions include 31-33, D49, F76, D97, and Q104; that span reads GGY.

It belongs to the methyltransferase superfamily. RsmH family.

It is found in the cytoplasm. It carries out the reaction cytidine(1402) in 16S rRNA + S-adenosyl-L-methionine = N(4)-methylcytidine(1402) in 16S rRNA + S-adenosyl-L-homocysteine + H(+). In terms of biological role, specifically methylates the N4 position of cytidine in position 1402 (C1402) of 16S rRNA. This is Ribosomal RNA small subunit methyltransferase H from Anaplasma marginale (strain Florida).